The following is a 305-amino-acid chain: Coenzyme PQQ synthesis protein B (305 aa).

It belongs to the PqqB family.

It participates in cofactor biosynthesis; pyrroloquinoline quinone biosynthesis. Its function is as follows. May be involved in the transport of PQQ or its precursor to the periplasm. In Methylobacillus flagellatus, this protein is Coenzyme PQQ synthesis protein B.